Consider the following 392-residue polypeptide: Galactose-1-phosphate uridylyltransferase (392 aa).

Zn(2+)-binding residues include Cys52 and Cys55. UDP-alpha-D-glucose-binding positions include Ala61 and Asn77 to Asp78. A Zn(2+)-binding site is contributed by His126. Position 194 (Asn194) interacts with UDP-alpha-D-glucose. Zn(2+) is bound at residue His205. Residue His207 is the Tele-UMP-histidine intermediate of the active site. Position 209 (Gln209) interacts with UDP-alpha-D-glucose. Residues Glu223, His323, His340, and His342 each coordinate Fe cation. UDP-alpha-D-glucose-binding positions include Lys355–Val358 and Tyr360–Glu361.

This sequence belongs to the galactose-1-phosphate uridylyltransferase type 1 family. In terms of assembly, homodimer. Zn(2+) serves as cofactor.

The catalysed reaction is alpha-D-galactose 1-phosphate + UDP-alpha-D-glucose = alpha-D-glucose 1-phosphate + UDP-alpha-D-galactose. The protein operates within carbohydrate metabolism; galactose metabolism. The sequence is that of Galactose-1-phosphate uridylyltransferase (gal-7) from Neurospora crassa (strain ATCC 24698 / 74-OR23-1A / CBS 708.71 / DSM 1257 / FGSC 987).